A 402-amino-acid chain; its full sequence is Major outer membrane porin (402 aa).

The N-terminal stretch at 1–22 (MKKLLKSALLFAATGSALSLQA) is a signal peptide.

The protein belongs to the chlamydial porin (CP) (TC 1.B.2) family. As to quaternary structure, part of a disulfide cross-linked outer membrane complex (COMC) composed of the major outer membrane porin, the small cysteine-rich protein (OmcA) and the large cysteine-rich periplasmic protein (OmcB).

It is found in the cell outer membrane. In elementary bodies (EBs, the infectious stage, which is able to survive outside the host cell) provides the structural integrity of the outer envelope through disulfide cross-links with the small cysteine-rich protein and the large cysteine-rich periplasmic protein. It has been described in publications as the Sarkosyl-insoluble COMC (Chlamydia outer membrane complex), and serves as the functional equivalent of peptidoglycan. Its function is as follows. Permits diffusion of specific solutes through the outer membrane. The polypeptide is Major outer membrane porin (ompA) (Chlamydia psittaci (Chlamydophila psittaci)).